The primary structure comprises 440 residues: L-gulonolactone oxidase (440 aa).

The FAD-binding PCMH-type domain maps to tyrosine 17–glutamine 187. Histidine 54 bears the Pros-8alpha-FAD histidine mark. The helical transmembrane segment at phenylalanine 253–isoleucine 273 threads the bilayer.

Belongs to the oxygen-dependent FAD-linked oxidoreductase family. The cofactor is FAD.

Its subcellular location is the microsome membrane. The protein resides in the endoplasmic reticulum membrane. It carries out the reaction L-gulono-1,4-lactone + O2 = L-ascorbate + H2O2 + H(+). The protein operates within cofactor biosynthesis; L-ascorbate biosynthesis via UDP-alpha-D-glucuronate pathway; L-ascorbate from UDP-alpha-D-glucuronate: step 4/4. Oxidizes L-gulono-1,4-lactone to hydrogen peroxide and L-xylo-hexulonolactone which spontaneously isomerizes to L-ascorbate. The chain is L-gulonolactone oxidase (GULO) from Bos taurus (Bovine).